The sequence spans 128 residues: Cystatin-12 (128 aa).

Residues 1–21 (MLWKSVLPVALIVLGIHDCSF) form the signal peptide. Disulfide bonds link C82/C92 and C105/C125. The N-linked (GlcNAc...) asparagine glycan is linked to N122.

Belongs to the cystatin family.

It is found in the secreted. In terms of biological role, may play a specialized role in spermatogenesis. In Rattus norvegicus (Rat), this protein is Cystatin-12 (Cst12).